We begin with the raw amino-acid sequence, 563 residues long: Cysteine--tRNA ligase, chloroplastic/mitochondrial (563 aa).

Cys-91 is a Zn(2+) binding site. Gly-92 is a binding site for L-cysteine. Residues 93–103 carry the 'HIGH' region motif; it reads VTAYDLSHIGH. Position 131 (Thr-131) interacts with L-cysteine. Residues 136-139 carry the 'KIIK' region motif; that stretch reads KIIA. Residues Cys-271, His-296, and Glu-300 each contribute to the Zn(2+) site. His-296 is an L-cysteine binding site. Positions 328-332 match the 'KMSKS' region motif; sequence KMSKS. Lys-331 lines the ATP pocket.

It belongs to the class-I aminoacyl-tRNA synthetase family. Requires Zn(2+) as cofactor.

Its subcellular location is the plastid. It localises to the chloroplast. The protein resides in the mitochondrion. It carries out the reaction tRNA(Cys) + L-cysteine + ATP = L-cysteinyl-tRNA(Cys) + AMP + diphosphate. Functionally, required for female gametophyte development. Is necessary for the fusion of central cell nuclei and programmed cell death (PCD) of the antipodals. The sequence is that of Cysteine--tRNA ligase, chloroplastic/mitochondrial from Arabidopsis thaliana (Mouse-ear cress).